A 334-amino-acid polypeptide reads, in one-letter code: Ventral anterior homeobox 1 (334 aa).

Positions 1 to 34 are enriched in basic and acidic residues; the sequence is MFGKPDKMDVRCHSDAEAARVSKNAHKESRESKG. Positions 1–41 are disordered; that stretch reads MFGKPDKMDVRCHSDAEAARVSKNAHKESRESKGAEGNLPA. Positions 100–159 form a DNA-binding region, homeobox; it reads PKRTRTSFTAEQLYRLEMEFQRCQYVVGRERTELARQLNLSETQVKVWFQNRRTKQKKDQ. Disordered regions lie at residues 234-263 and 314-334; these read PGPA…GLHA and SAFE…KALD. Residues 323-334 are compositionally biased toward basic and acidic residues; it reads NNKEGAEKKALD.

This sequence belongs to the EMX homeobox family.

The protein localises to the nucleus. Its function is as follows. Transcription factor that may function in dorsoventral specification of the forebrain. Required for axon guidance and major tract formation in the developing forebrain. May contribute to the differentiation of the neuroretina, pigmented epithelium and optic stalk. In Homo sapiens (Human), this protein is Ventral anterior homeobox 1 (VAX1).